A 590-amino-acid polypeptide reads, in one-letter code: Peroxisomal targeting signal receptor (590 aa).

Cysteine 6 participates in a covalent cross-link: Glycyl cysteine thioester (Cys-Gly) (interchain with G-Cter in ubiquitin). Positions 7–29 (SVGSNPLAQLNKHAQGQGSSLSN) are amphipathic helix 1 (AH1). Residue lysine 18 forms a Glycyl lysine isopeptide (Lys-Gly) (interchain with G-Cter in ubiquitin) linkage. Positions 18 to 30 (KHAQGQGSSLSNT) are enriched in polar residues. Residues 18–45 (KHAQGQGSSLSNTHVRHSGGVSGSNVFR) are disordered. Positions 56 to 74 (RQQLNSFMSQPMRLGEDKM) are amphipathic helix 2 (AH2). 3 short sequence motifs (wxxxF/Y motif) span residues 108 to 112 (WTREF), 139 to 143 (WKFRY), and 178 to 182 (WNDKF). An amphipathic helix 4 (AH4) region spans residues 227 to 243 (FQEVWDSIQQDTEEMLS). TPR repeat units lie at residues 285–319 (NPNA…DPKH), 320–353 (VDAW…DPNN), 424–457 (PDIQ…NPND), 459–491 (LMWN…KPSF), and 493–525 (RARY…HDVE).

It belongs to the peroxisomal targeting signal receptor family. As to quaternary structure, interacts (via WxxxF/Y and LVxEF motifs) with PEX14; promoting translocation through the PEX13-PEX14 docking complex. Monoubiquitinated at Cys-6 by PEX2 during PEX5 passage through the retrotranslocation channel: monoubiquitination acts as a signal for PEX5 extraction and is required for proper export from peroxisomes and recycling. When PEX5 recycling is compromised, polyubiquitinated at Lys-18 by PEX10 during its passage through the retrotranslocation channel, leading to its degradation.

It is found in the cytoplasm. The protein localises to the cytosol. It localises to the peroxisome matrix. In terms of biological role, receptor that mediates peroxisomal import of proteins containing a C-terminal PTS1-type tripeptide peroxisomal targeting signal (SKL-type). Binds to cargo proteins containing a PTS1 peroxisomal targeting signal in the cytosol, and translocates them into the peroxisome matrix by passing through the PEX13-PEX14 docking complex along with cargo proteins. PEX5 receptor is then retrotranslocated into the cytosol, leading to release of bound cargo in the peroxisome matrix, and reset for a subsequent peroxisome import cycle. This chain is Peroxisomal targeting signal receptor (PEX5), found in Candida glabrata (strain ATCC 2001 / BCRC 20586 / JCM 3761 / NBRC 0622 / NRRL Y-65 / CBS 138) (Yeast).